The following is a 199-amino-acid chain: V-type ATP synthase subunit E (199 aa).

The protein belongs to the V-ATPase E subunit family.

Produces ATP from ADP in the presence of a proton gradient across the membrane. The polypeptide is V-type ATP synthase subunit E (Borrelia garinii subsp. bavariensis (strain ATCC BAA-2496 / DSM 23469 / PBi) (Borreliella bavariensis)).